The sequence spans 94 residues: PqqA binding protein (94 aa).

It belongs to the PqqD family. Monomer. Interacts with PqqE.

Its pathway is cofactor biosynthesis; pyrroloquinoline quinone biosynthesis. Functionally, functions as a PqqA binding protein and presents PqqA to PqqE, in the pyrroloquinoline quinone (PQQ) biosynthetic pathway. The protein is PqqA binding protein of Acinetobacter baumannii (strain SDF).